Here is a 371-residue protein sequence, read N- to C-terminus: Phospholipid-transporting ATPase accessory subunit ivn1 (371 aa).

The Cytoplasmic portion of the chain corresponds to 1–39 (MSQTEIVKKPKHKRFKRPDKSRFVQQTLPAWQFIFTPWT). Residues 40-60 (VLPLLFLLGIVFAPLGAGMFV) form a helical membrane-spanning segment. The Extracellular portion of the chain corresponds to 61–325 (ASRRVKELRI…STTSVIGGKN (265 aa)). 2 disulfide bridges follow: cysteine 75-cysteine 111 and cysteine 166-cysteine 181. A glycan (N-linked (GlcNAc...) asparagine) is linked at asparagine 99. 6 N-linked (GlcNAc...) asparagine glycosylation sites follow: asparagine 190, asparagine 212, asparagine 216, asparagine 233, asparagine 284, and asparagine 297. Residues 326-346 (YFLGILYFVIGGLCAASGVIL) form a helical membrane-spanning segment. Topologically, residues 347-371 (SIACLIKPRRVGDPRYLSWNRGKSS) are cytoplasmic.

This sequence belongs to the CDC50/LEM3 family.

The protein resides in the endoplasmic reticulum membrane. Functionally, accessory component of a P4-ATPase flippase complex which catalyzes the hydrolysis of ATP coupled to the transport of aminophospholipids from the lumenal to the cytosolic leaflet of membranes and ensures the maintenance of asymmetric distribution of phospholipids. This Schizosaccharomyces pombe (strain 972 / ATCC 24843) (Fission yeast) protein is Phospholipid-transporting ATPase accessory subunit ivn1 (ivn1).